Here is a 1314-residue protein sequence, read N- to C-terminus: E3 ubiquitin-protein ligase RNF123 (1314 aa).

A2 carries the N-acetylalanine modification. A B30.2/SPRY domain is found at 74–254 (VDNEEEESQG…VAFNFGSRPL (181 aa)). S675 carries the post-translational modification Phosphoserine. R683 is modified (asymmetric dimethylarginine). Residues 968–974 (WILVRLW) are interaction with NFKB1. Zn(2+) contacts are provided by C1254, C1257, C1269, H1271, C1274, C1277, C1288, and C1291. An RING-type zinc finger spans residues 1254–1292 (CPICYAHPISAVFQPCGHKSCKACINQHLMNNKDCFFCK).

Component of the KPC complex composed of RNF123/KPC1 and UBAC1/KPC2. Interacts with UBAC1 and CDKN1B via its N-terminal domain. Interacts with RIGI (via N-terminus) and IFIH1 (via N-terminus). In terms of processing, ubiquitinated, leading to its degradation. Deubiquitinated by USP19, thereby stimulating CDKN1B ubiquitin-dependent degradation.

It is found in the cytoplasm. It carries out the reaction S-ubiquitinyl-[E2 ubiquitin-conjugating enzyme]-L-cysteine + [acceptor protein]-L-lysine = [E2 ubiquitin-conjugating enzyme]-L-cysteine + N(6)-ubiquitinyl-[acceptor protein]-L-lysine.. It functions in the pathway protein modification; protein ubiquitination. In terms of biological role, catalytic subunit of the KPC complex that acts as E3 ubiquitin-protein ligase. Promotes the ubiquitination and proteasome-mediated degradation of CDKN1B which is the cyclin-dependent kinase inhibitor at the G0-G1 transition of the cell cycle. Also acts as a key regulator of the NF-kappa-B signaling by promoting maturation of the NFKB1 component of NF-kappa-B: acts by catalyzing ubiquitination of the NFKB1 p105 precursor, leading to limited proteasomal degradation of NFKB1 p105 and generation of the active NFKB1 p50 subunit. Also functions as an inhibitor of innate antiviral signaling mediated by RIGI and IFIH1 independently of its E3 ligase activity. Interacts with the N-terminal CARD domains of RIGI and IFIH1 and competes with the downstream adapter MAVS. The polypeptide is E3 ubiquitin-protein ligase RNF123 (Homo sapiens (Human)).